The following is a 55-amino-acid chain: Protein CADMIUM TOLERANCE 1 (55 aa).

Residues 24 to 40 (GCLYACIFTALCCFCCY) form a helical membrane-spanning segment.

It belongs to the CYSTM1 family.

It is found in the cell membrane. It localises to the secreted. Its subcellular location is the cell wall. In terms of biological role, confers resistance to heavy metal ions (e.g. cadmium (CdCl(2)) and copper (CuCl(2))) by chelating them at the plasma membrane of root cells, thus stopping their entry and reducing their accumulation. Binds to aluminium (Al). The sequence is that of Protein CADMIUM TOLERANCE 1 from Oryza sativa subsp. indica (Rice).